Here is a 274-residue protein sequence, read N- to C-terminus: Orotidine 5'-phosphate decarboxylase (274 aa).

Catalysis depends on K95, which acts as the Proton donor.

The protein belongs to the OMP decarboxylase family. Type 2 subfamily.

The catalysed reaction is orotidine 5'-phosphate + H(+) = UMP + CO2. Its pathway is pyrimidine metabolism; UMP biosynthesis via de novo pathway; UMP from orotate: step 2/2. The sequence is that of Orotidine 5'-phosphate decarboxylase from Mycobacterium avium (strain 104).